The chain runs to 141 residues: HTH-type transcriptional repressor NsrR (141 aa).

One can recognise an HTH rrf2-type domain in the interval 2–129 (QLTSFTDYGL…DNYTLADLVE (128 aa)). A DNA-binding region (H-T-H motif) is located at residues 28 to 51 (ISEVTDVYGVSRNHMVKIINQLSR). Cysteine 91, cysteine 96, and cysteine 102 together coordinate [2Fe-2S] cluster.

[2Fe-2S] cluster is required as a cofactor.

In terms of biological role, nitric oxide-sensitive repressor of genes involved in protecting the cell against nitrosative stress. May require iron for activity. The sequence is that of HTH-type transcriptional repressor NsrR from Escherichia coli O139:H28 (strain E24377A / ETEC).